A 241-amino-acid chain; its full sequence is 2,3,4,5-tetrahydropyridine-2,6-dicarboxylate N-acetyltransferase (241 aa).

Belongs to the transferase hexapeptide repeat family. DapH subfamily.

It catalyses the reaction (S)-2,3,4,5-tetrahydrodipicolinate + acetyl-CoA + H2O = L-2-acetamido-6-oxoheptanedioate + CoA. The protein operates within amino-acid biosynthesis; L-lysine biosynthesis via DAP pathway; LL-2,6-diaminopimelate from (S)-tetrahydrodipicolinate (acetylase route): step 1/3. In terms of biological role, catalyzes the transfer of an acetyl group from acetyl-CoA to tetrahydrodipicolinate. The protein is 2,3,4,5-tetrahydropyridine-2,6-dicarboxylate N-acetyltransferase of Thermoanaerobacter pseudethanolicus (strain ATCC 33223 / 39E) (Clostridium thermohydrosulfuricum).